A 1342-amino-acid chain; its full sequence is MVYSYTEKKRIRKDFGKRPQVLDIPYLLSIQLDSFQKFIEQDPEGQYGLEAAFRSVFPIQSYSGNSELQYVSYRLGEPVFDVKECQIRGVTYSAPLRVKLRLVIYEREAPEGTVKDIKEQEVYMGEIPLMTENGTFVINGTERVIVSQLHRSPGVFFDSDKGKTHSSGKVLYNARIIPYRGSWLDFEFDPKDNLFVRIDRRRKLPATIILRALNFTTAQILDLFFEKVVFEIRDNKLQMELVPERLRGETASFDIEANGKVYVEKARRITARHIRQLEKDGIDRIEVPVEYIAGKVVAKDYIDENTGELICAANMELSLDLLAKLSQAGHKQIETLFTNDLDHSAYISETLRVDPTSDRLSALVEIYRMMRPGEPPTREAAENLFENLFFSEDRYDLSAVGRMKFNRSLLRDEIEGSGILSKEDITEVMKKLIDIRNGKGEVDDIDHLGNRRIRSVGEMAENQFRVGLVRVERAVKERLSLGDLDTLMPQDMINAKPISAAVKEFFGSSQLSQFMDQNNPLSEITHKRRISALGPGGLTRERAGFEVRDVHPTHYGRVCPIETPEGPNIGLINSLSVYAQTNEYGFLETPYRRVRDGVVTDEINYLSAIEEGNFVIAQANSNLDEDGRFIEDLVTCRSKGESSLFSRDQVDYMDVSTQQVVSVGASLIPFLEHDDANRALMGANMQRQAVPTLRADKPLVGTGMERAVAVDSGVTSVAKRGGTVQYVDASRIVIKVNEDEMYPGEAGIDIYNLTKYTRSNQNTCINQMPCVNLGEPIERGDVLADGPSTDLGELALGQNMRVAFMPWNGYNFEDSILVSERVVQEDRFTTIHIQELACVSRDTKLGPEEITADIPNVGEAALSKLDESGIVYIGAEVTGGDILVGKVTPKGETQLTPEEKLLRAIFGEKASDVKDSSLRVPNGVSGTVIDVQVFTRDGVEKDKRALEIEEMQLKQAKKDLTEELQILEAGLFARIHAVLVSGGIEADKLSKLPRDRWLELGLTDEDKQNQLEQLAEQYDEMKSEFEKKMDAKRRKITQGDDLAPGVLKIVKVYLAVKRQIQPGDKMAGRHGNKGVISKINPIEDMPYDENGTPVDIVLNPLGVPSRMNIGQILETHLGMAAKGIGEKINAMLKKQEEVAKLREFIQKAYDLGDSVCQKVDLSTFTDDEVLRLAENLKKGMPIATPVFDGATEKEIKELLQLGGLPTSGQITLFDGRTGEQFERQVTVGYMYMLKLNHLVDDKMHARSTGSYSLVTQQPLGGKAQFGGQRFGEMEVWALEAYGAAYTLQEMLTVKSDDVNGRTKMYKNIVDGDHRMEPGMPESFNVLLKEIRSLGINIELEEE.

Belongs to the RNA polymerase beta chain family. The RNAP catalytic core consists of 2 alpha, 1 beta, 1 beta' and 1 omega subunit. When a sigma factor is associated with the core the holoenzyme is formed, which can initiate transcription.

The catalysed reaction is RNA(n) + a ribonucleoside 5'-triphosphate = RNA(n+1) + diphosphate. In terms of biological role, DNA-dependent RNA polymerase catalyzes the transcription of DNA into RNA using the four ribonucleoside triphosphates as substrates. In Yersinia enterocolitica serotype O:8 / biotype 1B (strain NCTC 13174 / 8081), this protein is DNA-directed RNA polymerase subunit beta.